Here is a 338-residue protein sequence, read N- to C-terminus: MLIYDLTYEELEEFIVENGYKKFRADQIWNWLYKQKIEAFSEMNNIPEDIIKLLNDNYTFAGLETVIKNTSADGTIKFLFDLKDANLIETVLMSHNYGMSACVTTQVGCNIGCSFCASGVLKKKRDLTAGEIVAQIIRAEKESGVRVSSIVIMGIGEPFDNYKNFVKFISIVNHPKGLAIGARHITVSTSGLVPKIKEFAHLGIQVNLAVSLHAPNNEIRSKLMKINDRFKVEEVVDAIKYYIHVTNRRVTIEYIMIQDLNDSVETAVELAKLLKGMNVYVNLIPYNTVKEADYQRSSLENRLAFHKTLKEHKITAILRKEQGHDINAACGQLRSQNL.

Catalysis depends on Glu-89, which acts as the Proton acceptor. The region spanning 95-325 (HNYGMSACVT…AILRKEQGHD (231 aa)) is the Radical SAM core domain. The cysteines at positions 102 and 330 are disulfide-linked. [4Fe-4S] cluster-binding residues include Cys-109, Cys-113, and Cys-116. S-adenosyl-L-methionine contacts are provided by residues 156–157 (GE), Ser-188, 211–213 (SLH), and Asn-287. The active-site S-methylcysteine intermediate is the Cys-330.

It belongs to the radical SAM superfamily. RlmN family. [4Fe-4S] cluster is required as a cofactor.

Its subcellular location is the cytoplasm. The catalysed reaction is adenosine(2503) in 23S rRNA + 2 reduced [2Fe-2S]-[ferredoxin] + 2 S-adenosyl-L-methionine = 2-methyladenosine(2503) in 23S rRNA + 5'-deoxyadenosine + L-methionine + 2 oxidized [2Fe-2S]-[ferredoxin] + S-adenosyl-L-homocysteine. It catalyses the reaction adenosine(37) in tRNA + 2 reduced [2Fe-2S]-[ferredoxin] + 2 S-adenosyl-L-methionine = 2-methyladenosine(37) in tRNA + 5'-deoxyadenosine + L-methionine + 2 oxidized [2Fe-2S]-[ferredoxin] + S-adenosyl-L-homocysteine. Its function is as follows. Specifically methylates position 2 of adenine 2503 in 23S rRNA and position 2 of adenine 37 in tRNAs. This chain is Probable dual-specificity RNA methyltransferase RlmN, found in Acholeplasma laidlawii (strain PG-8A).